Reading from the N-terminus, the 209-residue chain is Molybdenum cofactor guanylyltransferase (209 aa).

GTP is bound by residues 14-16 (LAG), lysine 31, and aspartate 104. Aspartate 104 serves as a coordination point for Mg(2+).

Belongs to the MobA family. In terms of assembly, monomer. It depends on Mg(2+) as a cofactor.

The protein localises to the cytoplasm. The catalysed reaction is Mo-molybdopterin + GTP + H(+) = Mo-molybdopterin guanine dinucleotide + diphosphate. Transfers a GMP moiety from GTP to Mo-molybdopterin (Mo-MPT) cofactor (Moco or molybdenum cofactor) to form Mo-molybdopterin guanine dinucleotide (Mo-MGD) cofactor. The polypeptide is Molybdenum cofactor guanylyltransferase (Helicobacter pylori (strain J99 / ATCC 700824) (Campylobacter pylori J99)).